Consider the following 270-residue polypeptide: Elongation factor Ts (270 aa).

The tract at residues 81–84 (TDFV) is involved in Mg(2+) ion dislocation from EF-Tu.

This sequence belongs to the EF-Ts family.

Its subcellular location is the cytoplasm. In terms of biological role, associates with the EF-Tu.GDP complex and induces the exchange of GDP to GTP. It remains bound to the aminoacyl-tRNA.EF-Tu.GTP complex up to the GTP hydrolysis stage on the ribosome. The sequence is that of Elongation factor Ts from Wigglesworthia glossinidia brevipalpis.